Here is a 598-residue protein sequence, read N- to C-terminus: Elongation factor 4 (598 aa).

Positions 4–181 (KKIRNFAIIA…AIVNLIPPPQ (178 aa)) constitute a tr-type G domain. GTP-binding positions include 16-21 (DHGKST) and 128-131 (NKID).

Belongs to the TRAFAC class translation factor GTPase superfamily. Classic translation factor GTPase family. LepA subfamily.

It localises to the cell membrane. The catalysed reaction is GTP + H2O = GDP + phosphate + H(+). Functionally, required for accurate and efficient protein synthesis under certain stress conditions. May act as a fidelity factor of the translation reaction, by catalyzing a one-codon backward translocation of tRNAs on improperly translocated ribosomes. Back-translocation proceeds from a post-translocation (POST) complex to a pre-translocation (PRE) complex, thus giving elongation factor G a second chance to translocate the tRNAs correctly. Binds to ribosomes in a GTP-dependent manner. The chain is Elongation factor 4 from Mesomycoplasma hyopneumoniae (strain J / ATCC 25934 / NCTC 10110) (Mycoplasma hyopneumoniae).